The following is a 373-amino-acid chain: 3 beta-hydroxysteroid dehydrogenase/Delta 5--&gt;4-isomerase type 1 (373 aa).

NADP(+) is bound by residues 10 to 15 (GAGGFV), Y155, and K159. The active-site Proton donor is K159. Residues 288–308 (LPLLYWLAFLLETVSFLLRPV) form a helical membrane-spanning segment.

Belongs to the 3-beta-HSD family. As to expression, steroidogenic tissues (includes testes, ovaries and adrenal glands).

It localises to the endoplasmic reticulum membrane. The protein localises to the mitochondrion membrane. The enzyme catalyses a 3beta-hydroxy-Delta(5)-steroid + NAD(+) = a 3-oxo-Delta(5)-steroid + NADH + H(+). It carries out the reaction pregnenolone + NAD(+) = pregn-5-ene-3,20-dione + NADH + H(+). It catalyses the reaction 3beta-hydroxyandrost-5-en-17-one + NAD(+) = androst-5-ene-3,17-dione + NADH + H(+). The catalysed reaction is androst-5-en-3beta,17beta-diol + NAD(+) = 17beta-hydroxy-androst-5-en-3-one + NADH + H(+). The enzyme catalyses a 3beta-hydroxysteroid + NADP(+) = a 3-oxosteroid + NADPH + H(+). It carries out the reaction 5alpha-androstane-3beta,17beta-diol + NADP(+) = 17beta-hydroxy-5alpha-androstan-3-one + NADPH + H(+). It catalyses the reaction 3beta-hydroxy-5alpha-androstan-17-one + NADP(+) = 5alpha-androstan-3,17-dione + NADPH + H(+). The catalysed reaction is a 3-oxo-Delta(5)-steroid = a 3-oxo-Delta(4)-steroid. The enzyme catalyses pregn-5-ene-3,20-dione = progesterone. It carries out the reaction androst-5-ene-3,17-dione = androst-4-ene-3,17-dione. It catalyses the reaction 17beta-hydroxy-androst-5-en-3-one = testosterone. The catalysed reaction is 5alpha-androstane-3beta,17beta-diol + NAD(+) = 17beta-hydroxy-5alpha-androstan-3-one + NADH + H(+). The protein operates within steroid hormone biosynthesis. Its pathway is steroid metabolism. Functionally, a bifunctional enzyme responsible for the oxidation and isomerization of 3beta-hydroxy-Delta(5)-steroid precursors to 3-oxo-Delta(4)-steroids, an essential step in steroid hormone biosynthesis. Specifically catalyzes the conversion of pregnenolone to progesterone, 17alpha-hydroxypregnenolone to 17alpha-hydroxyprogesterone, dehydroepiandrosterone (DHEA) to 4-androstenedione, and androstenediol to testosterone. Additionally, catalyzes the interconversion between 3beta-hydroxy and 3-oxo-5alpha-androstane steroids controlling the bioavalability of the active forms. Specifically converts dihydrotestosterone to its inactive form 5alpha-androstanediol, that does not bind androgen receptor/AR. Also converts androstanedione, a precursor of testosterone and estrone, to epiandrosterone. Expected to use NAD(+) as preferred electron donor for the 3-beta-hydroxy-steroid dehydrogenase activity and NADPH for the 3-ketosteroid reductase activity. In Mus musculus (Mouse), this protein is 3 beta-hydroxysteroid dehydrogenase/Delta 5--&gt;4-isomerase type 1.